The sequence spans 150 residues: MEKMSDLPRELVEEILSRVPVKSMREVRVTCKTWNALSKHISKAEAAREGEFLGIAKKKFCRNSFLLFSIPWLRVLIVVDFSNAMKDAMKDAMKEIRSSFQAMRLIVANYDIATLSAFGEEQLAVLFQPFEGYVMEIWVTTKIEPSAVSS.

The F-box domain occupies 1-47 (MEKMSDLPRELVEEILSRVPVKSMREVRVTCKTWNALSKHISKAEAA).

This chain is Putative F-box protein At2g33655, found in Arabidopsis thaliana (Mouse-ear cress).